Reading from the N-terminus, the 114-residue chain is N(4)-acetylcytidine amidohydrolase (114 aa).

Residues 8 to 93 (TFFEFLTPLV…ALIQEIYPNI (86 aa)) enclose the ASCH domain. The active-site Proton acceptor is the K22. The active-site Nucleophile is the T25. The active-site Proton donor is E75.

This sequence belongs to the N(4)-acetylcytidine amidohydrolase family.

It catalyses the reaction N(4)-acetylcytidine + H2O = cytidine + acetate + H(+). It carries out the reaction N(4)-acetyl-2'-deoxycytidine + H2O = 2'-deoxycytidine + acetate + H(+). The catalysed reaction is N(4)-acetylcytosine + H2O = cytosine + acetate + H(+). In terms of biological role, catalyzes the hydrolysis of N(4)-acetylcytidine (ac4C). The polypeptide is N(4)-acetylcytidine amidohydrolase (Vibrio cholerae serotype O1 (strain ATCC 39541 / Classical Ogawa 395 / O395)).